Here is a 287-residue protein sequence, read N- to C-terminus: Pantothenate synthetase (287 aa).

37–44 contributes to the ATP binding site; that stretch reads MGALHEGH. His-44 serves as the catalytic Proton donor. Residue Gln-68 participates in (R)-pantoate binding. Beta-alanine is bound at residue Gln-68. An ATP-binding site is contributed by 154 to 157; that stretch reads GQKD. Gln-160 is a (R)-pantoate binding site. Residues Val-183 and 191-194 each bind ATP; that span reads LSSR.

This sequence belongs to the pantothenate synthetase family. Homodimer.

It localises to the cytoplasm. The enzyme catalyses (R)-pantoate + beta-alanine + ATP = (R)-pantothenate + AMP + diphosphate + H(+). It functions in the pathway cofactor biosynthesis; (R)-pantothenate biosynthesis; (R)-pantothenate from (R)-pantoate and beta-alanine: step 1/1. In terms of biological role, catalyzes the condensation of pantoate with beta-alanine in an ATP-dependent reaction via a pantoyl-adenylate intermediate. The protein is Pantothenate synthetase of Leifsonia xyli subsp. xyli (strain CTCB07).